Here is a 208-residue protein sequence, read N- to C-terminus: Kinetochore protein Spc25 (208 aa).

A coiled-coil region spans residues 31–101 (SKIAAKHQLI…KKQRRDELMG (71 aa)).

The protein belongs to the SPC25 family. In terms of assembly, component of the Ndc80 complex, which is composed of Ndc80, Nuf2 and Spc25.

The protein localises to the nucleus. The protein resides in the chromosome. Its subcellular location is the centromere. It is found in the kinetochore. Acts as a component of the essential kinetochore-associated Ndc80 complex, which is required for chromosome segregation and spindle checkpoint activity during meiosis and mitosis. Required for kinetochore integrity and the organization of stable microtubule binding sites in the outer plate of the kinetochore. Participates in SAC signaling that responds specifically to disruptions in spindle microtubule dynamics. The NDC80 complex synergistically enhances the affinity of the SKA1 complex for microtubules and may allow the NDC80 complex to track depolymerizing microtubules. This is Kinetochore protein Spc25 from Drosophila mojavensis (Fruit fly).